Here is an 838-residue protein sequence, read N- to C-terminus: Leucine--tRNA ligase (838 aa).

The short motif at 36 to 46 (PYPSGKIHMGH) is the 'HIGH' region element. The 'KMSKS' region motif lies at 611–615 (KMSKS). Lys614 contacts ATP.

It belongs to the class-I aminoacyl-tRNA synthetase family.

Its subcellular location is the cytoplasm. It catalyses the reaction tRNA(Leu) + L-leucine + ATP = L-leucyl-tRNA(Leu) + AMP + diphosphate. The chain is Leucine--tRNA ligase from Wolbachia sp. subsp. Drosophila simulans (strain wRi).